The sequence spans 807 residues: Glycerol-3-phosphate acyltransferase (807 aa).

Residues 308 to 313 carry the HXXXXD motif motif; sequence CHRSHM.

It belongs to the GPAT/DAPAT family.

The protein localises to the cell inner membrane. It catalyses the reaction sn-glycerol 3-phosphate + an acyl-CoA = a 1-acyl-sn-glycero-3-phosphate + CoA. Its pathway is phospholipid metabolism; CDP-diacylglycerol biosynthesis; CDP-diacylglycerol from sn-glycerol 3-phosphate: step 1/3. In Shewanella loihica (strain ATCC BAA-1088 / PV-4), this protein is Glycerol-3-phosphate acyltransferase.